The primary structure comprises 60 residues: Large ribosomal subunit protein bL32 (60 aa).

The tract at residues 1-23 (MAVPKRKKSKSRRNMHRSHHAIK) is disordered.

This sequence belongs to the bacterial ribosomal protein bL32 family.

This is Large ribosomal subunit protein bL32 from Wolbachia sp. subsp. Brugia malayi (strain TRS).